The primary structure comprises 263 residues: Type-2Ba cytolytic delta-endotoxin (263 aa).

Belongs to the cyt1/cyt2 endotoxin family. In terms of processing, active after proteolytic processing.

Its function is as follows. Kills the larvae of dipteran insects by making pores in the epithelial cell membrane of the insect midgut. This is Type-2Ba cytolytic delta-endotoxin (cyt2Ba1) from Bacillus thuringiensis subsp. israelensis.